We begin with the raw amino-acid sequence, 195 residues long: Heavy metal-associated isoprenylated plant protein 18 (195 aa).

Disordered stretches follow at residues 36–76 (DVVQ…KPET) and 145–172 (EKEKKDDEPITKDEENEIDRGVYMNPSS). 2 stretches are compositionally biased toward basic and acidic residues: residues 47 to 76 (TVTKKNEEGDIVDKKDETPEVEEKIDKPET) and 145 to 157 (EKEKKDDEPITKD). An HMA domain is found at 78–149 (TRKLEIHIAF…RIVKMEKEKK (72 aa)). The residue at position 192 (Cys-192) is a Cysteine methyl ester. A lipid anchor (S-farnesyl cysteine) is attached at Cys-192. A propeptide spans 193–195 (SIS) (removed in mature form).

Belongs to the HIPP family.

Its function is as follows. Probable heavy-metal-binding protein. Required for female gametophyte development and function. The protein is Heavy metal-associated isoprenylated plant protein 18 of Arabidopsis thaliana (Mouse-ear cress).